We begin with the raw amino-acid sequence, 380 residues long: Succinyl-diaminopimelate desuccinylase (380 aa).

H69 contacts Zn(2+). D71 is a catalytic residue. Position 102 (D102) interacts with Zn(2+). E135 (proton acceptor) is an active-site residue. Zn(2+) is bound by residues E136, E164, and H353.

It belongs to the peptidase M20A family. DapE subfamily. In terms of assembly, homodimer. Requires Zn(2+) as cofactor. It depends on Co(2+) as a cofactor.

It carries out the reaction N-succinyl-(2S,6S)-2,6-diaminopimelate + H2O = (2S,6S)-2,6-diaminopimelate + succinate. It functions in the pathway amino-acid biosynthesis; L-lysine biosynthesis via DAP pathway; LL-2,6-diaminopimelate from (S)-tetrahydrodipicolinate (succinylase route): step 3/3. In terms of biological role, catalyzes the hydrolysis of N-succinyl-L,L-diaminopimelic acid (SDAP), forming succinate and LL-2,6-diaminopimelate (DAP), an intermediate involved in the bacterial biosynthesis of lysine and meso-diaminopimelic acid, an essential component of bacterial cell walls. The chain is Succinyl-diaminopimelate desuccinylase from Cereibacter sphaeroides (strain ATCC 17023 / DSM 158 / JCM 6121 / CCUG 31486 / LMG 2827 / NBRC 12203 / NCIMB 8253 / ATH 2.4.1.) (Rhodobacter sphaeroides).